A 189-amino-acid chain; its full sequence is Large ribosomal subunit protein eL18 (189 aa).

It belongs to the eukaryotic ribosomal protein eL18 family.

The protein resides in the cytoplasm. This Aedes aegypti (Yellowfever mosquito) protein is Large ribosomal subunit protein eL18 (RpL18).